Reading from the N-terminus, the 304-residue chain is Probable HTH-type transcriptional regulator LgoR (304 aa).

The HTH gntR-type domain occupies 1–70 (MSRSQNLRHN…VGNDYVIARK (70 aa)). The H-T-H motif DNA-binding region spans 31-50 (QSALAEMYNISRTTVRHILS).

In terms of biological role, may be a positive transcriptional regulator for lgoD and/or lgoT. Is essential for growth on L-galactonate as the sole carbon source. This chain is Probable HTH-type transcriptional regulator LgoR (lgoR), found in Escherichia coli (strain K12).